Here is a 393-residue protein sequence, read N- to C-terminus: G protein-activated inward rectifier potassium channel 3 (393 aa).

The interval 1–23 (MAQENAAFSPGQEEPPRRRGRQR) is disordered. The Cytoplasmic portion of the chain corresponds to 1–57 (MAQENAAFSPGQEEPPRRRGRQRYVEKDGRCNVQQGNVRETYRYLTDLFTTLVDLQW). Residues 58-82 (RLSLLFFVLAYALTWLFFGAIWWLI) form a helical membrane-spanning segment. The Extracellular segment spans residues 83–106 (AYGRGDLEHLEDTAWTPCVNNLNG). Positions 107–118 (FVAAFLFSIETE) form an intramembrane region, helical; Pore-forming. An intramembrane region (pore-forming) is located at residues 119-125 (TTIGYGH). The Selectivity filter motif lies at 120 to 125 (TIGYGH). Topologically, residues 126 to 134 (RVITDQCPE) are extracellular. The helical transmembrane segment at 135 to 156 (GIVLLLLQAILGSMVNAFMVGC) threads the bilayer. The Cytoplasmic portion of the chain corresponds to 157 to 393 (MFVKISQPNK…LPPPESESKV (237 aa)). A disordered region spans residues 360 to 393 (KVEEEGAGEGAGGEAGADKEQNGCLPPPESESKV). The span at 384–393 (LPPPESESKV) shows a compositional bias: pro residues. The PDZ-binding motif lies at 390–393 (ESKV).

This sequence belongs to the inward rectifier-type potassium channel (TC 1.A.2.1) family. KCNJ9 subfamily. As to quaternary structure, associates with KCNJ3/GIRK1 to form a G-protein-activated heteromultimer pore-forming unit. Interacts (via PDZ-binding motif) with SNX27 (via PDZ domain); the interaction is required when endocytosed to prevent degradation in lysosomes and promote recycling to the plasma membrane.

The protein resides in the membrane. It catalyses the reaction K(+)(in) = K(+)(out). Functionally, inward rectifier potassium channels are characterized by a greater tendency to allow potassium to flow into the cell rather than out of it. Their voltage dependence is regulated by the concentration of extracellular potassium; as external potassium is raised, the voltage range of the channel opening shifts to more positive voltages. The inward rectification is mainly due to the blockage of outward current by internal magnesium, This receptor is controlled by G proteins. Unable to produce channel activity when expressed alone. Forms a functional channel in association with KCNJ3/GIRK1. The protein is G protein-activated inward rectifier potassium channel 3 (KCNJ9) of Homo sapiens (Human).